The chain runs to 158 residues: Transcription elongation factor GreA (158 aa).

Belongs to the GreA/GreB family.

In terms of biological role, necessary for efficient RNA polymerase transcription elongation past template-encoded arresting sites. The arresting sites in DNA have the property of trapping a certain fraction of elongating RNA polymerases that pass through, resulting in locked ternary complexes. Cleavage of the nascent transcript by cleavage factors such as GreA or GreB allows the resumption of elongation from the new 3'terminus. GreA releases sequences of 2 to 3 nucleotides. The polypeptide is Transcription elongation factor GreA (Rhizobium etli (strain CIAT 652)).